The sequence spans 768 residues: Phosphoribosylformylglycinamidine synthase subunit PurL (768 aa).

The active site involves H44. Residues Y47 and K86 each coordinate ATP. E88 contacts Mg(2+). Substrate contacts are provided by residues 89–92 (SHNH) and R111. The active-site Proton acceptor is the H90. Position 112 (D112) interacts with Mg(2+). Residue Q235 coordinates substrate. D263 contributes to the Mg(2+) binding site. A substrate-binding site is contributed by 307 to 309 (ESQ). D518 and G555 together coordinate ATP. N556 is a Mg(2+) binding site. S558 contributes to the substrate binding site.

Belongs to the FGAMS family. As to quaternary structure, monomer. Part of the FGAM synthase complex composed of 1 PurL, 1 PurQ and 2 PurS subunits.

It is found in the cytoplasm. It carries out the reaction N(2)-formyl-N(1)-(5-phospho-beta-D-ribosyl)glycinamide + L-glutamine + ATP + H2O = 2-formamido-N(1)-(5-O-phospho-beta-D-ribosyl)acetamidine + L-glutamate + ADP + phosphate + H(+). It functions in the pathway purine metabolism; IMP biosynthesis via de novo pathway; 5-amino-1-(5-phospho-D-ribosyl)imidazole from N(2)-formyl-N(1)-(5-phospho-D-ribosyl)glycinamide: step 1/2. Functionally, part of the phosphoribosylformylglycinamidine synthase complex involved in the purines biosynthetic pathway. Catalyzes the ATP-dependent conversion of formylglycinamide ribonucleotide (FGAR) and glutamine to yield formylglycinamidine ribonucleotide (FGAM) and glutamate. The FGAM synthase complex is composed of three subunits. PurQ produces an ammonia molecule by converting glutamine to glutamate. PurL transfers the ammonia molecule to FGAR to form FGAM in an ATP-dependent manner. PurS interacts with PurQ and PurL and is thought to assist in the transfer of the ammonia molecule from PurQ to PurL. This Synechococcus sp. (strain JA-2-3B'a(2-13)) (Cyanobacteria bacterium Yellowstone B-Prime) protein is Phosphoribosylformylglycinamidine synthase subunit PurL.